Consider the following 597-residue polypeptide: uncharacterized protein (597 aa).

The 151-residue stretch at 48 to 198 (LHPYNPYSSL…DSILSLTKET (151 aa)) folds into the Helicase ATP-binding domain. 61–68 (YDVGLGKT) contacts ATP. The DEVH box motif lies at 146-149 (DEVH). The region spanning 275 to 467 (KINAFINSIK…DIPKIDNEMV (193 aa)) is the Helicase C-terminal domain.

This sequence belongs to the helicase family.

In terms of biological role, the presence of the two linear plasmids, termed pGKL1 and pGKL2, in strains of Kluyveromyces lactis confers the killer phenotype to the host cell, by promoting the secretion of a toxin able to inhibit the growth of sensitive strains. This is an uncharacterized protein from Kluyveromyces lactis (strain ATCC 8585 / CBS 2359 / DSM 70799 / NBRC 1267 / NRRL Y-1140 / WM37) (Yeast).